A 363-amino-acid polypeptide reads, in one-letter code: 3-isopropylmalate dehydrogenase (363 aa).

78–91 (GKKWDTLPINERPE) provides a ligand contact to NAD(+). Substrate-binding residues include R99, R109, R138, and D227. Residues D227, D251, and D255 each coordinate Mg(2+). 285 to 297 (GSAPDIQGKNIAN) is an NAD(+) binding site.

This sequence belongs to the isocitrate and isopropylmalate dehydrogenases family. LeuB type 1 subfamily. In terms of assembly, homodimer. Requires Mg(2+) as cofactor. It depends on Mn(2+) as a cofactor.

The protein resides in the cytoplasm. The enzyme catalyses (2R,3S)-3-isopropylmalate + NAD(+) = 4-methyl-2-oxopentanoate + CO2 + NADH. It functions in the pathway amino-acid biosynthesis; L-leucine biosynthesis; L-leucine from 3-methyl-2-oxobutanoate: step 3/4. Its function is as follows. Catalyzes the oxidation of 3-carboxy-2-hydroxy-4-methylpentanoate (3-isopropylmalate) to 3-carboxy-4-methyl-2-oxopentanoate. The product decarboxylates to 4-methyl-2 oxopentanoate. This chain is 3-isopropylmalate dehydrogenase, found in Buchnera aphidicola subsp. Diuraphis noxia.